Here is a 783-residue protein sequence, read N- to C-terminus: Aconitate hydratase, mitochondrial (783 aa).

The N-terminal 25 residues, 1-25 (MITTRLARMGALAPKSRLLFGTRGM), are a transit peptide targeting the mitochondrion. Substrate-binding positions include glutamine 102 and 195–197 (DSH). The [4Fe-4S] cluster site is built by cysteine 388, cysteine 451, and cysteine 454. The substrate site is built by arginine 477 and arginine 482. A disordered region spans residues 524 to 555 (EFKLKAPTGDGLPSRGYDPGRDTYQAPPTDRS). Substrate is bound by residues arginine 610 and 673-674 (SR).

This sequence belongs to the aconitase/IPM isomerase family. [4Fe-4S] cluster serves as cofactor.

The protein localises to the mitochondrion. It catalyses the reaction citrate = D-threo-isocitrate. The catalysed reaction is (2R)-homocitrate = cis-homoaconitate + H2O. It participates in carbohydrate metabolism; tricarboxylic acid cycle; isocitrate from oxaloacetate: step 2/2. It functions in the pathway amino-acid biosynthesis; L-lysine biosynthesis via AAA pathway; L-alpha-aminoadipate from 2-oxoglutarate: step 2/5. Its function is as follows. Catalyzes the isomerization of citrate to isocitrate via cis-aconitate, a step in the citric acid cycle. Also catalyzes the reversible dehydration of (R)-homocitrate to cis-homoaconitate, a step in the alpha-aminoadipate pathway for lysine biosynthesis. In Emericella nidulans (strain FGSC A4 / ATCC 38163 / CBS 112.46 / NRRL 194 / M139) (Aspergillus nidulans), this protein is Aconitate hydratase, mitochondrial (acoA).